A 36-amino-acid polypeptide reads, in one-letter code: Dolichyl-diphosphooligosaccharide--protein glycosyltransferase subunit 2 (36 aa).

Belongs to the SWP1 family. As to quaternary structure, component of the oligosaccharyltransferase (OST) complex.

It is found in the endoplasmic reticulum. The protein resides in the endoplasmic reticulum membrane. The protein operates within protein modification; protein glycosylation. Functionally, subunit of the oligosaccharyl transferase (OST) complex that catalyzes the initial transfer of a defined glycan (Glc(3)Man(9)GlcNAc(2) in eukaryotes) from the lipid carrier dolichol-pyrophosphate to an asparagine residue within an Asn-X-Ser/Thr consensus motif in nascent polypeptide chains, the first step in protein N-glycosylation. N-glycosylation occurs cotranslationally and the complex associates with the Sec61 complex at the channel-forming translocon complex that mediates protein translocation across the endoplasmic reticulum (ER). All subunits are required for a maximal enzyme activity. The chain is Dolichyl-diphosphooligosaccharide--protein glycosyltransferase subunit 2 from Gallus gallus (Chicken).